We begin with the raw amino-acid sequence, 63 residues long: uncharacterized protein (63 aa).

The chain crosses the membrane as a helical span at residues 37–57 (IFFPTTFDVLLLAILIFLACA).

It localises to the cell membrane. This is an uncharacterized protein from Bacillus subtilis (strain 168).